Here is a 128-residue protein sequence, read N- to C-terminus: Holo-[acyl-carrier-protein] synthase (128 aa).

Positions 8 and 59 each coordinate Mg(2+).

The protein belongs to the P-Pant transferase superfamily. AcpS family. The cofactor is Mg(2+).

Its subcellular location is the cytoplasm. It catalyses the reaction apo-[ACP] + CoA = holo-[ACP] + adenosine 3',5'-bisphosphate + H(+). Functionally, transfers the 4'-phosphopantetheine moiety from coenzyme A to a Ser of acyl-carrier-protein. This Rickettsia typhi (strain ATCC VR-144 / Wilmington) protein is Holo-[acyl-carrier-protein] synthase.